We begin with the raw amino-acid sequence, 65 residues long: Large ribosomal subunit protein bL35 (65 aa).

Basic residues-rich tracts occupy residues 1–16 (MPKM…RFKK) and 31–45 (HRFH…RQLR). A disordered region spans residues 1 to 47 (MPKMKTHRASAKRFKKTANGGLKSASAYTSHRFHGKTKKQRRQLRGT).

This sequence belongs to the bacterial ribosomal protein bL35 family.

In Leuconostoc citreum (strain KM20), this protein is Large ribosomal subunit protein bL35.